The following is a 463-amino-acid chain: Glutamate--tRNA ligase 1 (463 aa).

Residues 10–20 carry the 'HIGH' region motif; the sequence is PSPTGYLHIGG. Residues 238 to 242 carry the 'KMSKS' region motif; it reads KLSKR. Position 241 (K241) interacts with ATP.

This sequence belongs to the class-I aminoacyl-tRNA synthetase family. Glutamate--tRNA ligase type 1 subfamily. In terms of assembly, monomer.

Its subcellular location is the cytoplasm. The catalysed reaction is tRNA(Glu) + L-glutamate + ATP = L-glutamyl-tRNA(Glu) + AMP + diphosphate. Catalyzes the attachment of glutamate to tRNA(Glu) in a two-step reaction: glutamate is first activated by ATP to form Glu-AMP and then transferred to the acceptor end of tRNA(Glu). The chain is Glutamate--tRNA ligase 1 from Helicobacter pylori (strain P12).